Here is a 422-residue protein sequence, read N- to C-terminus: Lactose-binding protein (422 aa).

The first 28 residues, 1-28 (MDYSRLLKRSVSAALTAAALLCSTAAFA), serve as a signal peptide directing secretion. A lactose-binding region spans residues 246-277 (SNDGIRALTSGDVASVLRGVWITGTVKSQPDQ).

It belongs to the bacterial solute-binding protein 1 family.

It localises to the periplasm. Part of the binding-protein-dependent transport system for lactose. The sequence is that of Lactose-binding protein (lacE) from Rhizobium radiobacter (Agrobacterium tumefaciens).